The following is a 244-amino-acid chain: Mannose-binding protein C (244 aa).

Residues 1-18 (MSIFTSFLLLCVVTVVYA) form the signal peptide. In terms of domain architecture, Collagen-like spans 38–96 (GLNGFPGKDGRDGAKGEKGEPGQGLRGLQGPPGKVGPTGPPGNPGLKGAVGPKGDRGDR). Residues 40–101 (NGFPGKDGRD…DRGDRAEFDT (62 aa)) form a disordered region. Pro-43 carries the post-translational modification 4-hydroxyproline. Basic and acidic residues predominate over residues 45–57 (KDGRDGAKGEKGE). Pro-58, Pro-69, Pro-78, and Pro-81 each carry 4-hydroxyproline. Low complexity predominate over residues 65–74 (LQGPPGKVGP). Basic and acidic residues predominate over residues 90 to 99 (KGDRGDRAEF). A coiled-coil region spans residues 108 to 126 (IAALRSELRALRNWVLFSL). In terms of domain architecture, C-type lectin spans 129-241 (KVGKKYFVSS…CSDSFLAICE (113 aa)). Disulfide bonds link Cys-151–Cys-240 and Cys-218–Cys-232. N-linked (GlcNAc...) asparagine glycosylation occurs at Asn-210.

As to quaternary structure, oligomeric complex of 3 or more homotrimers. Interacts with MASP1 and MASP2. Interacts with MEP1A and MEP1B and may inhibit their catalytic activity. Post-translationally, hydroxylation on proline residues within the sequence motif, GXPG, is most likely to be 4-hydroxy as this fits the requirement for 4-hydroxylation in vertebrates.

It localises to the secreted. Functionally, calcium-dependent lectin involved in innate immune defense. Binds mannose, fucose and N-acetylglucosamine on different microorganisms and activates the lectin complement pathway. Binds to late apoptotic cells, as well as to apoptotic blebs and to necrotic cells, but not to early apoptotic cells, facilitating their uptake by macrophages. The polypeptide is Mannose-binding protein C (Mbl2) (Mus musculus (Mouse)).